The primary structure comprises 102 residues: Serum amyloid A-5 protein (102 aa).

The disordered stretch occupies residues 68–102 (GRGHEDSMADQEANRWGRSGNDPNHYRPAGLPDKY). A compositionally biased stretch (basic and acidic residues) spans 69-82 (RGHEDSMADQEANR).

It belongs to the SAA family. As to expression, expressed by the liver; secreted in plasma.

Its subcellular location is the secreted. Major acute phase reactant. Apolipoprotein of the HDL complex. The chain is Serum amyloid A-5 protein from Mesocricetus auratus (Golden hamster).